The following is a 501-amino-acid chain: 2,3-bisphosphoglycerate-independent phosphoglycerate mutase (501 aa).

Residues aspartate 12 and serine 62 each coordinate Mn(2+). Catalysis depends on serine 62, which acts as the Phosphoserine intermediate. Residues histidine 121, 150-151, arginine 182, arginine 188, 253-256, and lysine 322 contribute to the substrate site; these read RD and RSDR. 5 residues coordinate Mn(2+): aspartate 389, histidine 393, aspartate 430, histidine 431, and histidine 449.

Belongs to the BPG-independent phosphoglycerate mutase family. In terms of assembly, monomer. The cofactor is Mn(2+).

It catalyses the reaction (2R)-2-phosphoglycerate = (2R)-3-phosphoglycerate. The protein operates within carbohydrate degradation; glycolysis; pyruvate from D-glyceraldehyde 3-phosphate: step 3/5. Functionally, catalyzes the interconversion of 2-phosphoglycerate and 3-phosphoglycerate. This chain is 2,3-bisphosphoglycerate-independent phosphoglycerate mutase, found in Ehrlichia ruminantium (strain Welgevonden).